A 289-amino-acid chain; its full sequence is MPKASHQDLRFAFRELLASGSCFHTASVFDPMSARIAADLGFEVGILGGSVASLQVLAAPDFALITLSEFVEQATRIGRVAQLPVLADADHGYGNALNVMRTVIELERAGVAALTIEDTLLPAQFGRKSTDLIPVEEGVGKIRAALEARVDSSLSIIARTNAGVLSTEEIIVRTQSYQKAGADAICMVGVKDFEQLEQIAEHLTVPLMLVTYGNPNLRDDERLARLGVRIVVDGHAAYFAAIKATYDCLRLQRGQQNKSENLSATELSHTYTQPEDYIRWAKEYMSVEE.

Residue S50 participates in substrate binding. Position 88 (D88) interacts with Mg(2+). Substrate is bound by residues R159 and H235.

It belongs to the isocitrate lyase/PEP mutase superfamily. Oxaloacetate decarboxylase family. In terms of assembly, homotetramer; dimer of dimers. It depends on Mg(2+) as a cofactor.

The enzyme catalyses oxaloacetate + H(+) = pyruvate + CO2. Functionally, catalyzes the decarboxylation of oxaloacetate into pyruvate. Seems to play a role in maintaining cellular concentrations of bicarbonate and pyruvate. In Pseudomonas putida (strain GB-1), this protein is Oxaloacetate decarboxylase.